A 308-amino-acid chain; its full sequence is Ribosomal RNA large subunit methyltransferase F (308 aa).

This sequence belongs to the methyltransferase superfamily. METTL16/RlmF family.

Its subcellular location is the cytoplasm. It carries out the reaction adenosine(1618) in 23S rRNA + S-adenosyl-L-methionine = N(6)-methyladenosine(1618) in 23S rRNA + S-adenosyl-L-homocysteine + H(+). In terms of biological role, specifically methylates the adenine in position 1618 of 23S rRNA. The chain is Ribosomal RNA large subunit methyltransferase F from Shigella boydii serotype 18 (strain CDC 3083-94 / BS512).